The sequence spans 96 residues: Large ribosomal subunit protein bL28 (96 aa).

The protein belongs to the bacterial ribosomal protein bL28 family.

The protein is Large ribosomal subunit protein bL28 of Orientia tsutsugamushi (strain Boryong) (Rickettsia tsutsugamushi).